The primary structure comprises 394 residues: uncharacterized protein (394 aa).

Ser117 and Ser121 each carry phosphoserine. 3 disordered regions span residues 177-295, 315-347, and 370-394; these read DSDE…PGTF, KRSI…GSLS, and SSEV…AHRV. Residues 178–190 are compositionally biased toward acidic residues; that stretch reads SDEEDEVDDEEIE. Composition is skewed to polar residues over residues 191–207 and 216–230; these read SFNS…NSRY and EKQS…VSQI. Acidic residues-rich tracts occupy residues 231-263 and 284-295; these read SDDE…DDED and IPDDTDFVPGTF. A compositionally biased stretch (polar residues) spans 370 to 379; it reads SSEVLRNSKS. Ser379 is modified (phosphoserine).

The protein resides in the nucleus. This is an uncharacterized protein from Schizosaccharomyces pombe (strain 972 / ATCC 24843) (Fission yeast).